A 272-amino-acid polypeptide reads, in one-letter code: Putative phosphatase BU028/BU029 (272 aa).

Asp-8 (nucleophile) is an active-site residue. Mg(2+) is bound at residue Asp-8. Leu-9 is a phosphate binding site. Asp-10 lines the Mg(2+) pocket. Phosphate is bound by residues 42–43 (SG) and Lys-191. A Mg(2+)-binding site is contributed by Asp-214. Asn-217 lines the phosphate pocket.

Belongs to the HAD-like hydrolase superfamily. Cof family. The cofactor is Mg(2+).

This Buchnera aphidicola subsp. Acyrthosiphon pisum (strain APS) (Acyrthosiphon pisum symbiotic bacterium) protein is Putative phosphatase BU028/BU029.